Here is a 450-residue protein sequence, read N- to C-terminus: LanC-like protein 2 (450 aa).

Gly2 carries the N-myristoyl glycine lipid modification. The interaction with inositol phospholipids stretch occupies residues 2 to 14 (GETMSKRLKFHLG). Residue Tyr198 is modified to Phosphotyrosine.

This sequence belongs to the LanC-like protein family. As to quaternary structure, interacts with an array of inositol phospholipids such as phosphatidylinositol 3-phosphate (PI3P), phosphatidylinositol 4-phosphate (PI4P) and phosphatidylinositol 5-phosphate (PI5P). PIP-binding enhances membrane association. Myristoylated. Essential for membrane association.

The protein resides in the nucleus. The protein localises to the cytoplasm. It localises to the cell membrane. Its function is as follows. Necessary for abscisic acid (ABA) binding on the cell membrane and activation of the ABA signaling pathway in granulocytes. The polypeptide is LanC-like protein 2 (Lancl2) (Mus musculus (Mouse)).